We begin with the raw amino-acid sequence, 512 residues long: Respiratory nitrate reductase 1 beta chain (512 aa).

4Fe-4S ferredoxin-type domains are found at residues 7-35, 175-206, and 208-237; these read VGMVLNLDKCIGCHTCSVTCKNVWTSREG, TFMMYLPRLCEHCLNPACVATCPSGAIYKREE, and GIVLIDQDKCRGWRMCITGCPYKKIYFNWK. 7 residues coordinate [4Fe-4S] cluster: Cys16, Cys19, Cys22, Cys26, Cys184, Cys187, and Cys192. Residues Cys196, Cys217, and Cys223 each coordinate [3Fe-4S] cluster. Cys227, Cys244, Cys247, Cys259, and Cys263 together coordinate [4Fe-4S] cluster.

As to quaternary structure, dimer of heterotrimers each composed of an alpha, a beta and a gamma chain. Alpha and beta are catalytic chains; gamma chains are involved in binding the enzyme complex to the cytoplasmic membrane. It depends on [4Fe-4S] cluster as a cofactor. The cofactor is [3Fe-4S] cluster.

It localises to the cell membrane. The enzyme catalyses nitrate + a quinol = a quinone + nitrite + H2O. The nitrate reductase enzyme complex allows S.flexneri to use nitrate as an electron acceptor during anaerobic growth. The beta chain is an electron transfer unit containing four cysteine clusters involved in the formation of iron-sulfur centers. Electrons are transferred from the gamma chain to the molybdenum cofactor of the alpha subunit. This chain is Respiratory nitrate reductase 1 beta chain (narH), found in Shigella flexneri.